We begin with the raw amino-acid sequence, 61 residues long: Potassium channel toxin alpha-KTx 18.1 (61 aa).

The signal sequence occupies residues 1–24 (MRFTGIILILISMTLIDSFFEMKV). Cystine bridges form between C33/C52, C38/C57, and C42/C59.

Expressed by the venom gland.

The protein resides in the secreted. Functionally, reversible blocker of both Kv1.3/KCNA3 potassium channels (high affinity) and Shaker B (mammalian Kv1.1 analog) potassium channels (very low affinity). The chain is Potassium channel toxin alpha-KTx 18.1 from Tityus obscurus (Amazonian scorpion).